The following is a 54-amino-acid chain: UPF0391 membrane protein BAV1230 (54 aa).

2 consecutive transmembrane segments (helical) span residues 5–25 (AAVFFVIALIAAVLGFGGIAA) and 27–47 (AAGIAKILFFVFLVLALLSVL).

Belongs to the UPF0391 family.

It localises to the cell membrane. This Bordetella avium (strain 197N) protein is UPF0391 membrane protein BAV1230.